Reading from the N-terminus, the 346-residue chain is uncharacterized protein (346 aa).

It belongs to the MG067/MG068/MG395 family.

This is an uncharacterized protein from Mycoplasma pneumoniae (strain ATCC 29342 / M129 / Subtype 1) (Mycoplasmoides pneumoniae).